We begin with the raw amino-acid sequence, 150 residues long: Dual specificity protein phosphatase 23 (150 aa).

The region spanning 7–150 (NFSWVLPGRL…AVFQFYQRTK (144 aa)) is the Tyrosine-protein phosphatase domain. Cysteine 95 functions as the Phosphocysteine intermediate in the catalytic mechanism.

It belongs to the protein-tyrosine phosphatase family. Non-receptor class dual specificity subfamily. As to expression, widely expressed. Highly expressed in spleen, prostate, colon, adrenal gland, mammary gland, thyroid and trachea. Expressed at lower level in uterus, small intestine, bladder, bone marrow, brain, spinal cord and stomach.

The protein resides in the cytoplasm. It is found in the cytosol. Its subcellular location is the nucleus. The enzyme catalyses O-phospho-L-tyrosyl-[protein] + H2O = L-tyrosyl-[protein] + phosphate. It catalyses the reaction O-phospho-L-seryl-[protein] + H2O = L-seryl-[protein] + phosphate. It carries out the reaction O-phospho-L-threonyl-[protein] + H2O = L-threonyl-[protein] + phosphate. Protein phosphatase that mediates dephosphorylation of proteins phosphorylated on Tyr and Ser/Thr residues. In vitro, it can dephosphorylate p44-ERK1 (MAPK3) but not p54 SAPK-beta (MAPK10) in vitro. Able to enhance activation of JNK and p38 (MAPK14). The sequence is that of Dual specificity protein phosphatase 23 (DUSP23) from Homo sapiens (Human).